We begin with the raw amino-acid sequence, 233 residues long: Germin-like protein 3-7 (233 aa).

Residues M1 to A35 form the signal peptide. Residues C44 and C63 are joined by a disulfide bond. Residues A77–K225 enclose the Cupin type-1 domain. Mn(2+) contacts are provided by H125, H127, E132, and H171. N178 carries N-linked (GlcNAc...) asparagine glycosylation.

This sequence belongs to the germin family. Oligomer (believed to be a pentamer but probably hexamer).

The protein resides in the secreted. It localises to the extracellular space. Its subcellular location is the apoplast. In terms of biological role, may play a role in plant defense. Probably has no oxalate oxidase activity even if the active site is conserved. The sequence is that of Germin-like protein 3-7 (GER7) from Oryza sativa subsp. japonica (Rice).